The primary structure comprises 3373 residues: Intermembrane lipid transfer protein vps13A (3373 aa).

Positions F3–E119 constitute a Chorein N-terminal domain. Disordered regions lie at residues P818 to S858, V1028 to S1096, N1259 to K1304, D1648 to K1729, and Q1872 to D1913. Polar residues predominate over residues T823–I839. Composition is skewed to low complexity over residues S840–S858 and S1048–Q1066. Basic and acidic residues-rich tracts occupy residues S1263 to L1274 and R1288 to K1304. 3 stretches are compositionally biased toward low complexity: residues Q1659–S1685, S1695–S1716, and S1884–S1898. The segment covering F1899 to S1909 has biased composition (polar residues). The SHR-BD domain occupies T2405–E2706. A disordered region spans residues R2909–G2933. Residues N2911–N2920 show a composition bias toward low complexity.

Belongs to the VPS13 family.

The protein localises to the membrane. Its function is as follows. Mediates the transfer of lipids between membranes at organelle contact sites. The sequence is that of Intermembrane lipid transfer protein vps13A (vps13A) from Dictyostelium discoideum (Social amoeba).